The sequence spans 284 residues: UTP--glucose-1-phosphate uridylyltransferase (284 aa).

It belongs to the UDPGP type 2 family.

The catalysed reaction is alpha-D-glucose 1-phosphate + UTP + H(+) = UDP-alpha-D-glucose + diphosphate. The protein is UTP--glucose-1-phosphate uridylyltransferase (celA) of Komagataeibacter xylinus (Gluconacetobacter xylinus).